The sequence spans 447 residues: Methylenetetrahydrofolate--tRNA-(uracil-5-)-methyltransferase TrmFO (447 aa).

13–18 (GAGLAG) contributes to the FAD binding site.

It belongs to the MnmG family. TrmFO subfamily. Requires FAD as cofactor.

Its subcellular location is the cytoplasm. It carries out the reaction uridine(54) in tRNA + (6R)-5,10-methylene-5,6,7,8-tetrahydrofolate + NADH + H(+) = 5-methyluridine(54) in tRNA + (6S)-5,6,7,8-tetrahydrofolate + NAD(+). It catalyses the reaction uridine(54) in tRNA + (6R)-5,10-methylene-5,6,7,8-tetrahydrofolate + NADPH + H(+) = 5-methyluridine(54) in tRNA + (6S)-5,6,7,8-tetrahydrofolate + NADP(+). Its function is as follows. Catalyzes the folate-dependent formation of 5-methyl-uridine at position 54 (M-5-U54) in all tRNAs. This Streptococcus thermophilus (strain CNRZ 1066) protein is Methylenetetrahydrofolate--tRNA-(uracil-5-)-methyltransferase TrmFO.